A 246-amino-acid polypeptide reads, in one-letter code: Neuromodulin (246 aa).

Positions 1–246 are disordered; the sequence is MLCCMRRTKQ…EESKADQENA (246 aa). S-palmitoyl cysteine attachment occurs at residues C3 and C4. The span at 9 to 33 shows a compositional bias: basic and acidic residues; sequence KQVEKNEDGDQKIEQDGIKPEDKAH. Residues 32 to 61 form the IQ domain; the sequence is AHKAATKIQASFRGHITRKKLKGEKKADAP. Low complexity-rich tracts occupy residues 87–99 and 125–157; these read ASAA…ADSA and SEQP…KAST. A compositionally biased stretch (basic and acidic residues) spans 164–176; the sequence is KADEAQDKEEPKQ. A compositionally biased stretch (low complexity) spans 177–203; sequence ADVPAADTTATTTPAAEDATAKATAQP. Composition is skewed to basic and acidic residues over residues 213–225 and 237–246; these read TEEK…ETKP and EESKADQENA.

The protein belongs to the neuromodulin family. Binds calmodulin with a greater affinity in the absence of Ca(2+) than in its presence. Palmitoylated. Palmitoylation is essential for plasma membrane association. In terms of tissue distribution, expressed in neurons.

It localises to the cell membrane. It is found in the cell projection. The protein resides in the growth cone membrane. Its subcellular location is the synapse. The protein localises to the filopodium membrane. This protein is associated with nerve growth. It is a major component of the motile 'growth cones' that form the tips of elongating axons. Plays a role in axonal and dendritic filopodia induction. In Gallus gallus (Chicken), this protein is Neuromodulin (GAP43).